Consider the following 200-residue polypeptide: Lipopolysaccharide core heptose(II)-phosphate phosphatase (200 aa).

Residues 1–25 (MLAFCRSSLKSKKYFIILLALAAIA) form the signal peptide.

This sequence belongs to the phosphoglycerate mutase family. Ais subfamily.

It is found in the periplasm. It participates in bacterial outer membrane biogenesis; lipopolysaccharide metabolism. Its function is as follows. Catalyzes the dephosphorylation of heptose(II) of the outer membrane lipopolysaccharide core. The chain is Lipopolysaccharide core heptose(II)-phosphate phosphatase from Escherichia coli (strain SE11).